The chain runs to 246 residues: Probable transcriptional regulatory protein HAPS_0943 (246 aa).

The protein belongs to the TACO1 family.

The protein localises to the cytoplasm. This chain is Probable transcriptional regulatory protein HAPS_0943, found in Glaesserella parasuis serovar 5 (strain SH0165) (Haemophilus parasuis).